Reading from the N-terminus, the 420-residue chain is Glucose-1-phosphate adenylyltransferase 2 (420 aa).

Alpha-D-glucose 1-phosphate is bound by residues tyrosine 109, glycine 175, 190–191 (EK), and serine 208.

This sequence belongs to the bacterial/plant glucose-1-phosphate adenylyltransferase family. As to quaternary structure, homotetramer.

It catalyses the reaction alpha-D-glucose 1-phosphate + ATP + H(+) = ADP-alpha-D-glucose + diphosphate. The protein operates within glycan biosynthesis; glycogen biosynthesis. In terms of biological role, involved in the biosynthesis of ADP-glucose, a building block required for the elongation reactions to produce glycogen. Catalyzes the reaction between ATP and alpha-D-glucose 1-phosphate (G1P) to produce pyrophosphate and ADP-Glc. In Pseudoalteromonas atlantica (strain T6c / ATCC BAA-1087), this protein is Glucose-1-phosphate adenylyltransferase 2.